Consider the following 194-residue polypeptide: Dihydrofolate reductase HdrB (194 aa).

The 177-residue stretch at 18 to 194 (RFVLVAAVAD…ADRGAEESDE (177 aa)) folds into the DHFR domain. NADP(+)-binding positions include A24 and 30–36 (VIGRDGT). D44 provides a ligand contact to substrate. 62–63 (KT) contributes to the NADP(+) binding site. 2 residues coordinate substrate: R69 and R78. NADP(+) contacts are provided by residues 84 to 85 (TT) and 123 to 130 (GGATVYEQ). T141 contributes to the substrate binding site. A disordered region spans residues 173–194 (SFVTYERKQPAAADRGAEESDE).

The protein belongs to the dihydrofolate reductase family.

The catalysed reaction is (6S)-5,6,7,8-tetrahydrofolate + NADP(+) = 7,8-dihydrofolate + NADPH + H(+). It functions in the pathway cofactor biosynthesis; tetrahydrofolate biosynthesis; 5,6,7,8-tetrahydrofolate from 7,8-dihydrofolate: step 1/1. With respect to regulation, maximum activity at KCl concentration of 0.5 M and activity decreases with increasing concentration of KCl. Functionally, key enzyme in folate metabolism. Catalyzes an essential reaction for de novo glycine and purine synthesis, and for DNA precursor synthesis. The sequence is that of Dihydrofolate reductase HdrB (hdrB) from Haloferax volcanii (Halobacterium volcanii).